The chain runs to 91 residues: Small ribosomal subunit protein uS19 (91 aa).

This sequence belongs to the universal ribosomal protein uS19 family.

Its function is as follows. Protein S19 forms a complex with S13 that binds strongly to the 16S ribosomal RNA. In Lactiplantibacillus plantarum (strain ATCC BAA-793 / NCIMB 8826 / WCFS1) (Lactobacillus plantarum), this protein is Small ribosomal subunit protein uS19.